The following is a 317-amino-acid chain: Putative 2-hydroxyacid dehydrogenase SAR2389 (317 aa).

NAD(+) contacts are provided by residues 155–156 (EI), 234–236 (ASR), and Asp-260. The active site involves Arg-236. Residue Glu-265 is part of the active site. His-283 functions as the Proton donor in the catalytic mechanism. An NAD(+)-binding site is contributed by 283–286 (HIGN).

Belongs to the D-isomer specific 2-hydroxyacid dehydrogenase family.

This chain is Putative 2-hydroxyacid dehydrogenase SAR2389, found in Staphylococcus aureus (strain MRSA252).